The primary structure comprises 62 residues: Photosystem II reaction center protein Z (62 aa).

Met1 is subject to N-formylmethionine. Residues 1–4 (MTIL) are Lumenal-facing. A helical membrane pass occupies residues 5–25 (FQLALAALVILSFVMVIGVPV). The Cytoplasmic segment spans residues 26–36 (AYASPQDWDRS). The chain crosses the membrane as a helical span at residues 37-58 (KQLIFLGSGLWIALVLVVGVLN). Residues 59-62 (FFVV) are Lumenal-facing.

It belongs to the PsbZ family. In terms of assembly, PSII is composed of 1 copy each of membrane proteins PsbA, PsbB, PsbC, PsbD, PsbE, PsbF, PsbH, PsbI, PsbJ, PsbK, PsbL, PsbM, PsbT, PsbX, PsbY, PsbZ, Psb30/Ycf12, peripheral proteins PsbO, CyanoQ (PsbQ), PsbU, PsbV and a large number of cofactors. It forms dimeric complexes. Part of a photosystem II (PSII) assembly intermediate complex PSII-I; crystallized from a strain deleted of psbJ, it forms monomeric PSII before addition of the oxygen evolving complex. PSII-I includes 3 assembly factors not found in mature PSII (Psb27, Psb28 and Psb34). PSII binds multiple chlorophylls, carotenoids and specific lipids. serves as cofactor.

It is found in the cellular thylakoid membrane. May control the interaction of photosystem II (PSII) cores with the light-harvesting antenna, regulates electron flow through the 2 photosystem reaction centers. PSII is a light-driven water plastoquinone oxidoreductase, using light energy to abstract electrons from H(2)O, generating a proton gradient subsequently used for ATP formation. Functionally, may also aid in binding of PsbK, Psb30/Ycf12 and the oxygen-evolving complex to PSII, at least in vitro. This Thermosynechococcus vestitus (strain NIES-2133 / IAM M-273 / BP-1) protein is Photosystem II reaction center protein Z.